We begin with the raw amino-acid sequence, 227 residues long: Translation initiation factor 6 (227 aa).

This sequence belongs to the eIF-6 family.

Its function is as follows. Binds to the 50S ribosomal subunit and prevents its association with the 30S ribosomal subunit to form the 70S initiation complex. The chain is Translation initiation factor 6 from Methanococcus aeolicus (strain ATCC BAA-1280 / DSM 17508 / OCM 812 / Nankai-3).